Here is a 1072-residue protein sequence, read N- to C-terminus: DNA-directed RNA polymerase subunit beta (1072 aa).

Belongs to the RNA polymerase beta chain family. In terms of assembly, in plastids the minimal PEP RNA polymerase catalytic core is composed of four subunits: alpha, beta, beta', and beta''. When a (nuclear-encoded) sigma factor is associated with the core the holoenzyme is formed, which can initiate transcription.

Its subcellular location is the plastid. The protein resides in the chloroplast. The catalysed reaction is RNA(n) + a ribonucleoside 5'-triphosphate = RNA(n+1) + diphosphate. In terms of biological role, DNA-dependent RNA polymerase catalyzes the transcription of DNA into RNA using the four ribonucleoside triphosphates as substrates. This is DNA-directed RNA polymerase subunit beta from Olimarabidopsis pumila (Dwarf rocket).